The chain runs to 212 residues: Transmembrane emp24 domain-containing protein p24delta7 (212 aa).

The first 22 residues, 1–22 (MNHRRSSIVLLILSILSPVTLS), serve as a signal peptide directing secretion. Residues 23-179 (IRYELLSGHT…HNLNIATNSK (157 aa)) are Lumenal-facing. The GOLD domain maps to 32–147 (TKCISEEIHA…VETMEFEVKK (116 aa)). Positions 162–175 (LRDREEEMHNLNIA) form a coiled coil. An Omega-N-methylated arginine modification is found at Arg-165. Residues 180–200 (MAWLSFVSLAVCLSVAGLQFW) traverse the membrane as a helical segment. At 201-212 (HLKTFFQKKKLI) the chain is on the cytoplasmic side. The COPII vesicle coat-binding motif lies at 205 to 206 (FF). Positions 205–212 (FFQKKKLI) match the COPI vesicle coat-binding motif.

The protein belongs to the EMP24/GP25L family. Probably oligomerizes with other members of the EMP24/GP25L family. Associates with the COPI vesicle coat (coatomer). Associates with the COPII vesicle coat (coatomer).

The protein localises to the endoplasmic reticulum membrane. Its subcellular location is the golgi apparatus. It localises to the cis-Golgi network membrane. It is found in the golgi stack membrane. Its function is as follows. Involved in vesicular protein trafficking. Mainly functions in the early secretory pathway. Thought to act as cargo receptor at the lumenal side for incorporation of secretory cargo molecules into transport vesicles and to be involved in vesicle coat formation at the cytoplasmic side. In Arabidopsis thaliana (Mouse-ear cress), this protein is Transmembrane emp24 domain-containing protein p24delta7.